The sequence spans 313 residues: HPr kinase/phosphorylase (313 aa).

Catalysis depends on residues H140 and K161. 155–162 (GDSGVGKS) contributes to the ATP binding site. S162 is a binding site for Mg(2+). Residue D179 is the Proton acceptor; for phosphorylation activity. Proton donor; for dephosphorylation activity of the active site. Residues 203 to 212 (LEIRGIGIID) are important for the catalytic mechanism of both phosphorylation and dephosphorylation. E204 lines the Mg(2+) pocket. Residue R245 is part of the active site. The tract at residues 266 to 271 (PVKVGR) is important for the catalytic mechanism of dephosphorylation.

Belongs to the HPrK/P family. In terms of assembly, homohexamer. It depends on Mg(2+) as a cofactor.

It catalyses the reaction [HPr protein]-L-serine + ATP = [HPr protein]-O-phospho-L-serine + ADP + H(+). The enzyme catalyses [HPr protein]-O-phospho-L-serine + phosphate + H(+) = [HPr protein]-L-serine + diphosphate. Functionally, catalyzes the ATP- as well as the pyrophosphate-dependent phosphorylation of a specific serine residue in HPr, a phosphocarrier protein of the phosphoenolpyruvate-dependent sugar phosphotransferase system (PTS). HprK/P also catalyzes the pyrophosphate-producing, inorganic phosphate-dependent dephosphorylation (phosphorolysis) of seryl-phosphorylated HPr (P-Ser-HPr). The two antagonistic activities of HprK/P are regulated by several intracellular metabolites, which change their concentration in response to the absence or presence of rapidly metabolisable carbon sources (glucose, fructose, etc.) in the growth medium. Therefore, by controlling the phosphorylation state of HPr, HPrK/P is a sensor enzyme that plays a major role in the regulation of carbon metabolism and sugar transport: it mediates carbon catabolite repression (CCR), and regulates PTS-catalyzed carbohydrate uptake and inducer exclusion. The polypeptide is HPr kinase/phosphorylase (Latilactobacillus sakei subsp. sakei (strain 23K) (Lactobacillus sakei subsp. sakei)).